Here is a 335-residue protein sequence, read N- to C-terminus: Serpentine receptor class XA 10 (335 aa).

Residues 1 to 10 are Extracellular-facing; it reads MDVDAAVVKR. A helical membrane pass occupies residues 11–31; sequence IALWVYETCSVFNLFYCITLS. Residues 32-46 lie on the Cytoplasmic side of the membrane; the sequence is LAIKTSKNNALPATY. The helical transmembrane segment at 47 to 67 threads the bilayer; it reads IYNMAISNALLVIFGIMVYIL. Residues 68–82 lie on the Extracellular side of the membrane; that stretch reads PYYMSDKTYKTYRDS. A helical transmembrane segment spans residues 83-103; the sequence is IGAMISVGVTFNYLHPMLTLI. Over 104 to 126 the chain is Cytoplasmic; sequence LMTINRIAVVVSMQASQLFTSSK. A helical transmembrane segment spans residues 127-147; sequence IWLYTSFHMTANFACLIIPYL. Residues 148-177 lie on the Extracellular side of the membrane; it reads SECRINYDIRKVGFISECAPDRHQITTFSN. The chain crosses the membrane as a helical span at residues 178–198; that stretch reads YYSVFFPFVAFFFNVLVIINF. At 199–238 the chain is on the cytoplasmic side; it reads KLQRSPTYTKIKNMFRRGNGDQFTSMPSDVLKAKKKTERM. A helical membrane pass occupies residues 239-259; the sequence is LMIQAFITAFYLSVYELTSLV. At 260-276 the chain is on the extracellular side; the sequence is LRVVPELFGNLSLDGKL. The helical transmembrane segment at 277–297 threads the bilayer; sequence AFTYFRLAQVPCHVFLVYFIF. Topologically, residues 298 to 319 are cytoplasmic; sequence TPVTRKIYMDFVRERVFCMKPA.

Belongs to the nematode receptor-like protein srxa family.

The protein resides in the membrane. This is Serpentine receptor class XA 10 (srxa-10) from Caenorhabditis elegans.